The primary structure comprises 61 residues: Lens epithelial cell protein LEP503 (61 aa).

The protein is Lens epithelial cell protein LEP503 (Lenep) of Mus musculus (Mouse).